The primary structure comprises 538 residues: Importin subunit alpha-6 (538 aa).

Positions 1–58 (MSYKPSAKTEVRRNRYKVSVDADEGRRRREDNMVEIRKNKREENLQKKRREGFNPSMA) constitute an IBB domain. The disordered stretch occupies residues 1-69 (MSYKPSAKTE…QPGQDFSSSL (69 aa)). A compositionally biased stretch (basic and acidic residues) spans 7-46 (AKTEVRRNRYKVSVDADEGRRRREDNMVEIRKNKREENLQ). Over residues 56–69 (SMASQPGQDFSSSL) the composition is skewed to polar residues. ARM repeat units follow at residues 109–149 (NPPI…NIAS), 152–191 (SENT…NVAG), 194–234 (PKCR…NFCR), 236–275 (KPQP…YLSD), 278–317 (NEKI…NIVT), 320–360 (DIQT…NITA), 363–402 (TSQI…NATS), and 406–445 (HDQI…NILK).

Belongs to the importin alpha family. As to quaternary structure, forms a complex with importin subunit beta-1.

It is found in the nucleus envelope. Functionally, binds to conventional NLS motifs and mediates nuclear protein import across the nuclear envelope. Acts as a cellular receptor for the nuclear import of the virD2 protein of Agrobacterium, but is not essential for Agrobacterium-mediated root transformation. This Arabidopsis thaliana (Mouse-ear cress) protein is Importin subunit alpha-6.